Consider the following 194-residue polypeptide: HTH-type transcriptional regulator BetI (194 aa).

An HTH tetR-type domain is found at Pro-8–Leu-68. The segment at residues Thr-31 to Phe-50 is a DNA-binding region (H-T-H motif).

It participates in amine and polyamine biosynthesis; betaine biosynthesis via choline pathway [regulation]. Functionally, repressor involved in the biosynthesis of the osmoprotectant glycine betaine. It represses transcription of the choline transporter BetT and the genes of BetAB involved in the synthesis of glycine betaine. This is HTH-type transcriptional regulator BetI from Brucella anthropi (strain ATCC 49188 / DSM 6882 / CCUG 24695 / JCM 21032 / LMG 3331 / NBRC 15819 / NCTC 12168 / Alc 37) (Ochrobactrum anthropi).